A 653-amino-acid polypeptide reads, in one-letter code: ATP-dependent zinc metalloprotease FtsH 1 (653 aa).

Topologically, residues 1–7 (MSRFFKS) are cytoplasmic. A helical membrane pass occupies residues 8-28 (AAFPILIVVVLAFFAQRLINP). The Extracellular portion of the chain corresponds to 29–105 (GDSGPRYDYS…FDIEGTKSNG (77 aa)). The chain crosses the membrane as a helical span at residues 106 to 126 (WLSLLTYVLPFLIFIGFWIFL). The Cytoplasmic portion of the chain corresponds to 127 to 653 (MNQVQGGGSK…MHFPERPELA (527 aa)). Residue 198-205 (GPPGTGKT) coordinates ATP. Position 420 (His420) interacts with Zn(2+). The active site involves Glu421. Zn(2+) is bound by residues His424 and Asp496. Residues 603 to 653 (EEVFGAEASPPPDVPLPPATERGRDTPRPLPRPGLAGGAAEMHFPERPELA) are disordered. Positions 611–620 (SPPPDVPLPP) are enriched in pro residues.

In the central section; belongs to the AAA ATPase family. It in the C-terminal section; belongs to the peptidase M41 family. In terms of assembly, homohexamer. It depends on Zn(2+) as a cofactor.

It localises to the cell membrane. Functionally, acts as a processive, ATP-dependent zinc metallopeptidase for both cytoplasmic and membrane proteins. Plays a role in the quality control of integral membrane proteins. This Conexibacter woesei (strain DSM 14684 / CCUG 47730 / CIP 108061 / JCM 11494 / NBRC 100937 / ID131577) protein is ATP-dependent zinc metalloprotease FtsH 1.